The sequence spans 480 residues: MQITIERKPLGQIEADALIVPVFEGRRDARFGAEDLFASGEVAGKALEMTLLHHAPGVRATRVLLVGAGAAGKFDAAGMRRLSGAAVRFLKAKSVKKIALVLDSEFSGSNFASAAVEGALLGNFEPDRYKTGNEKKSLDTFIVAGDTPELESAVARGRILAEAQNFSRDLVNEPANLLTPLGMADAARKMAAEFGLECEVLDRDAMQKLGMGSLLGVAIGSAEPPVLIVLRYRPAKSEGAAHLGLVGKGVTFDTGGISIKPADGMEKMKYDMAGGAAMIGAMRAIAQLKPAIPVSAYIPAVENMPGSRAQRPGDIVTAMNGKTIEVINTDAEGRLILADALTYARRQGCTHLVDAATLTGAVVVALGHLNVGLFANDDAMRDRVLAAAKDEGERMWSLPLEDDYKEYLKSGFADIANVGGRWGGAITAAIFLKEFAEETPWVHLDIAGTAWLDENKPYLAKGPTGLPVRTLARLAMDWKA.

Residues K248 and D253 each coordinate Mn(2+). The active site involves K260. Mn(2+) is bound by residues D271, D330, and E332. R334 is a catalytic residue.

This sequence belongs to the peptidase M17 family. The cofactor is Mn(2+).

The protein resides in the cytoplasm. The enzyme catalyses Release of an N-terminal amino acid, Xaa-|-Yaa-, in which Xaa is preferably Leu, but may be other amino acids including Pro although not Arg or Lys, and Yaa may be Pro. Amino acid amides and methyl esters are also readily hydrolyzed, but rates on arylamides are exceedingly low.. It carries out the reaction Release of an N-terminal amino acid, preferentially leucine, but not glutamic or aspartic acids.. Functionally, presumably involved in the processing and regular turnover of intracellular proteins. Catalyzes the removal of unsubstituted N-terminal amino acids from various peptides. This chain is Probable cytosol aminopeptidase, found in Solibacter usitatus (strain Ellin6076).